The chain runs to 195 residues: Peptidyl-tRNA hydrolase (195 aa).

Tyr-17 serves as a coordination point for tRNA. His-22 serves as the catalytic Proton acceptor. TRNA contacts are provided by Phe-68, Asn-70, and Asn-116.

This sequence belongs to the PTH family. Monomer.

It is found in the cytoplasm. The enzyme catalyses an N-acyl-L-alpha-aminoacyl-tRNA + H2O = an N-acyl-L-amino acid + a tRNA + H(+). Its function is as follows. Hydrolyzes ribosome-free peptidyl-tRNAs (with 1 or more amino acids incorporated), which drop off the ribosome during protein synthesis, or as a result of ribosome stalling. In terms of biological role, catalyzes the release of premature peptidyl moieties from peptidyl-tRNA molecules trapped in stalled 50S ribosomal subunits, and thus maintains levels of free tRNAs and 50S ribosomes. The protein is Peptidyl-tRNA hydrolase of Shewanella amazonensis (strain ATCC BAA-1098 / SB2B).